The chain runs to 120 residues: UPF0295 protein Aflv_0370 (120 aa).

2 consecutive transmembrane segments (helical) span residues 12–32 (IRTF…GGIF) and 42–62 (LFMI…FWIG).

This sequence belongs to the UPF0295 family.

The protein resides in the cell membrane. The protein is UPF0295 protein Aflv_0370 of Anoxybacillus flavithermus (strain DSM 21510 / WK1).